A 292-amino-acid chain; its full sequence is Brix domain-containing protein ZK795.3 (292 aa).

Positions 78–259 (PKIVITTSRD…PYQIKLGTLE (182 aa)) constitute a Brix domain.

The protein is Brix domain-containing protein ZK795.3 of Caenorhabditis elegans.